The sequence spans 734 residues: Photosystem I P700 chlorophyll a apoprotein A2 (734 aa).

8 helical membrane passes run 46 to 69, 135 to 158, 175 to 199, 273 to 291, 330 to 353, 369 to 395, 417 to 439, and 517 to 535; these read IFAS…FHVA, LYTG…LHLQ, LNHH…HVAI, MAHH…GHMY, LHFQ…QHMY, SALY…IFFI, ALIS…LYVH, and FLVH…LILV. Residues cysteine 559 and cysteine 568 each coordinate [4Fe-4S] cluster. 2 helical membrane passes run 575 to 596 and 643 to 665; these read AFYL…YWHW and LSVW…MFLI. The chlorophyll a site is built by histidine 654, methionine 662, and tyrosine 670. Position 671 (tryptophan 671) interacts with phylloquinone. A helical transmembrane segment spans residues 707–727; that stretch reads LVGLAHFSVGYVFTYAAFVIA.

It belongs to the PsaA/PsaB family. In terms of assembly, the PsaA/B heterodimer binds the P700 chlorophyll special pair and subsequent electron acceptors. PSI consists of a core antenna complex that captures photons, and an electron transfer chain that converts photonic excitation into a charge separation. The eukaryotic PSI reaction center is composed of at least 11 subunits. P700 is a chlorophyll a/chlorophyll a' dimer, A0 is one or more chlorophyll a, A1 is one or both phylloquinones and FX is a shared 4Fe-4S iron-sulfur center. serves as cofactor.

The protein localises to the plastid. It is found in the chloroplast thylakoid membrane. The catalysed reaction is reduced [plastocyanin] + hnu + oxidized [2Fe-2S]-[ferredoxin] = oxidized [plastocyanin] + reduced [2Fe-2S]-[ferredoxin]. Its function is as follows. PsaA and PsaB bind P700, the primary electron donor of photosystem I (PSI), as well as the electron acceptors A0, A1 and FX. PSI is a plastocyanin/cytochrome c6-ferredoxin oxidoreductase, converting photonic excitation into a charge separation, which transfers an electron from the donor P700 chlorophyll pair to the spectroscopically characterized acceptors A0, A1, FX, FA and FB in turn. Oxidized P700 is reduced on the lumenal side of the thylakoid membrane by plastocyanin or cytochrome c6. The protein is Photosystem I P700 chlorophyll a apoprotein A2 of Nephroselmis olivacea (Green alga).